The primary structure comprises 546 residues: Chaperonin GroEL (546 aa).

ATP is bound by residues 30 to 33 (TLGP), K51, 87 to 91 (DGTTT), G415, 479 to 481 (NAA), and D495.

Belongs to the chaperonin (HSP60) family. In terms of assembly, forms a cylinder of 14 subunits composed of two heptameric rings stacked back-to-back. Interacts with the co-chaperonin GroES.

The protein localises to the cytoplasm. It carries out the reaction ATP + H2O + a folded polypeptide = ADP + phosphate + an unfolded polypeptide.. Together with its co-chaperonin GroES, plays an essential role in assisting protein folding. The GroEL-GroES system forms a nano-cage that allows encapsulation of the non-native substrate proteins and provides a physical environment optimized to promote and accelerate protein folding. The polypeptide is Chaperonin GroEL (Azotobacter vinelandii).